The following is a 169-amino-acid chain: Protein-export protein SecB (169 aa).

This sequence belongs to the SecB family. In terms of assembly, homotetramer, a dimer of dimers. One homotetramer interacts with 1 SecA dimer.

It localises to the cytoplasm. Its function is as follows. One of the proteins required for the normal export of preproteins out of the cell cytoplasm. It is a molecular chaperone that binds to a subset of precursor proteins, maintaining them in a translocation-competent state. It also specifically binds to its receptor SecA. In Alteromonas mediterranea (strain DSM 17117 / CIP 110805 / LMG 28347 / Deep ecotype), this protein is Protein-export protein SecB.